Consider the following 326-residue polypeptide: Phospho-N-acetylmuramoyl-pentapeptide-transferase (326 aa).

10 helical membrane passes run 13–33, 57–77, 85–105, 121–141, 155–175, 181–201, 208–228, 232–252, 257–277, and 305–325; these read ILAP…IFIP, GTPT…ILIM, EMIL…DDIL, MILL…NVGT, NLGI…TNAV, IDGL…IIGF, VAVF…FNAF, IFMG…IALM, LFVI…IIQV, and VKIV…GFVA.

It belongs to the glycosyltransferase 4 family. MraY subfamily. It depends on Mg(2+) as a cofactor.

The protein resides in the cell membrane. The enzyme catalyses UDP-N-acetyl-alpha-D-muramoyl-L-alanyl-gamma-D-glutamyl-meso-2,6-diaminopimeloyl-D-alanyl-D-alanine + di-trans,octa-cis-undecaprenyl phosphate = di-trans,octa-cis-undecaprenyl diphospho-N-acetyl-alpha-D-muramoyl-L-alanyl-D-glutamyl-meso-2,6-diaminopimeloyl-D-alanyl-D-alanine + UMP. The protein operates within cell wall biogenesis; peptidoglycan biosynthesis. In terms of biological role, catalyzes the initial step of the lipid cycle reactions in the biosynthesis of the cell wall peptidoglycan: transfers peptidoglycan precursor phospho-MurNAc-pentapeptide from UDP-MurNAc-pentapeptide onto the lipid carrier undecaprenyl phosphate, yielding undecaprenyl-pyrophosphoryl-MurNAc-pentapeptide, known as lipid I. This Clostridium beijerinckii (strain ATCC 51743 / NCIMB 8052) (Clostridium acetobutylicum) protein is Phospho-N-acetylmuramoyl-pentapeptide-transferase.